A 526-amino-acid polypeptide reads, in one-letter code: Cytochrome P450 monooxygenase ucsK (526 aa).

The chain crosses the membrane as a helical span at residues 7–27; that stretch reads PVLAAATAVSFGFYLAGLFVY. The N-linked (GlcNAc...) asparagine glycan is linked to N403. C467 is a heme binding site.

It belongs to the cytochrome P450 family. It depends on heme as a cofactor.

It is found in the membrane. Its pathway is mycotoxin biosynthesis. Functionally, cytochrome P450 monooxygenase; part of the gene cluster that mediates the biosynthesis of UCS1025A, a member of the pyrrolizidinone family that acts as a strong telomerase inhibitor and displays potent antibacterial and antitumor properties. These compounds share a hemiaminal-containing pyrrolizidinone core fused with a gamma-lactone, giving a furopyrrolizidine that is connected to a decalin fragment. The polyketide synthase module (PKS) of the PKS-NRPS ucsA is responsible for the synthesis of the polyketide backbone via the condensation of an acetyl-CoA starter unit with 6 malonyl-CoA units. The downstream nonribosomal peptide synthetase (NRPS) module then amidates the carboxyl end of the polyketide with a 2S,3S-methylproline derived from L-isoleucine by the 2-oxoglutarate-dependent dioxygenase ucsF which converts L-isoleucine to (4S,5S)-4-methylpyrroline-5-carboxylate that is further converted to 2S,3S-methylproline by the pyrroline-5-carboxylate reductase ucsG. Reductive release of the completed aminoacyl polyketide from the assembly line can form the 3-pyrrolin-2-one structure via an intramolecular Knoevenagel reaction. Because ucsA lacks a designated enoylreductase (ER) domain, the required activity is provided the enoyl reductase ucsL. This keto acyclic precursor is the substrate of the Diels-Alderase ucsH, that catalyzes the Diels-Alder cycloaddition. Oxidation of the 3S-methyl group to a carboxylate by the cytochrome P450 monooxygenase ucsK allows an oxa-Michael cyclization that might involve the reductase/dehydrogenase ucsI and which furnishes the furopyrrolizidine. The oxidase ucsJ likely plays a critical role in stereoselective reduction of the C5-C6 double bond to afford the required R-configured carboxylate group. Further enolization and oxidation at C5 by an unidentified enzyme affords the last intermediate that can undergo oxa-Michael cyclization to yield UCS1025A. The polypeptide is Cytochrome P450 monooxygenase ucsK (Acremonium sp).